Here is a 497-residue protein sequence, read N- to C-terminus: MVRVPFVTAVTTVFSYGVIFGFGHLRDWFRALLRSLFSGHSPAAAGTNLKGYAPICGGQEDFYYRRFVRRVQDCFWRPIASKPDAWFDVVERYSNDSNKTLHRTTKTSRCLNLGSYNYLGFAAADEYCTPRVIESLKKYSASTCSVRVDGGNTKLHVELEELVARFVGKPAAILFGMGYVTNSAIIPALIGKGGLIISDSLNHNSIVNGARGSGASVQVFQHNNPAHLEEVLREQIAGGQPRTHRRWKKIIVIVEGIYSMEGELCKLPEIVAVCKKYKAYTYLDEAHSIGAVGKTGRGVCELLGVDPADVDIMMGTFTKSFGSCGGYIAASKEIIDHLKHICPAHIYATSMSPPAVQQVISAIEVILGEDGSDRGAKKLAQIRENSNFFRSELEKMGFEVLGDNDSPVMPIMLYNPAKMPAFSRECLRQKVAIVTVSFPATPLLLARARICISASHSREDLIKGLEVISKVGDLVGIKYLPVEHEKTTSAEKLKKIQ.

Residues 4-24 (VPFVTAVTTVFSYGVIFGFGH) form a helical membrane-spanning segment. N6-(pyridoxal phosphate)lysine is present on K319.

Belongs to the class-II pyridoxal-phosphate-dependent aminotransferase family. In terms of assembly, heterodimer with LCB1. Component of the serine palmitoyltransferase (SPT) complex, composed of LCB1 and LCB2. Pyridoxal 5'-phosphate serves as cofactor.

It is found in the endoplasmic reticulum membrane. The enzyme catalyses L-serine + hexadecanoyl-CoA + H(+) = 3-oxosphinganine + CO2 + CoA. It participates in lipid metabolism; sphingolipid metabolism. Functionally, serine palmitoyltransferase (SPT). The heterodimer formed with LCB1 constitutes the catalytic core. The protein is Long chain base biosynthesis protein 2c of Oryza sativa subsp. japonica (Rice).